The primary structure comprises 109 residues: uncharacterized protein (109 aa).

The protein belongs to the archaeal ATPase family.

This is an uncharacterized protein from Methanocaldococcus jannaschii (strain ATCC 43067 / DSM 2661 / JAL-1 / JCM 10045 / NBRC 100440) (Methanococcus jannaschii).